Reading from the N-terminus, the 543-residue chain is Zinc finger CCHC domain-containing protein 7 (543 aa).

The segment at 51-71 (EEEHEEKNSGNSESSSSKPNQ) is disordered. Residues 59 to 68 (SGNSESSSSK) are compositionally biased toward low complexity. Residues lysine 131, lysine 139, lysine 141, lysine 239, and lysine 254 each participate in a glycyl lysine isopeptide (Lys-Gly) (interchain with G-Cter in SUMO2) cross-link. 3 consecutive CCHC-type zinc fingers follow at residues 241-258 (IICRNCDKRGHLSKNCPL), 263-280 (RRCFLCSRRGHLLYSCPA), and 304-321 (KQCDRCHMLGHYTDACTE). Lysine 339 participates in a covalent cross-link: Glycyl lysine isopeptide (Lys-Gly) (interchain with G-Cter in SUMO2). The segment at 348–365 (AYCYHCAQKGHYGHECPE) adopts a CCHC-type 4 zinc-finger fold. Glycyl lysine isopeptide (Lys-Gly) (interchain with G-Cter in SUMO2) cross-links involve residues lysine 412, lysine 417, and lysine 435. The segment at 414 to 543 (PYIKAANENP…FLIKQRKKKS (130 aa)) is disordered. Composition is skewed to basic and acidic residues over residues 441–457 (QENKETQKEMKNKNRNW) and 465–475 (RHREVDEDFPR). A Glycyl lysine isopeptide (Lys-Gly) (interchain with G-Cter in SUMO2) cross-link involves residue lysine 478. Residues 479–491 (TYSSPGSFKTQKP) are compositionally biased toward polar residues. Phosphoserine occurs at positions 482 and 485. Residues lysine 487, lysine 490, and lysine 493 each participate in a glycyl lysine isopeptide (Lys-Gly) (interchain with G-Cter in SUMO2) cross-link. Residues 493-502 (KPFHRSSHYH) are compositionally biased toward basic residues. Residues 503 to 515 (TSREDKSPKEGKR) are compositionally biased toward basic and acidic residues. Lysine 537 participates in a covalent cross-link: Glycyl lysine isopeptide (Lys-Gly) (interchain with G-Cter in SUMO2).

Component of a nucleolar TRAMP-like complex, an ATP-dependent exosome regulatory complex consisting of a helicase (MTREX), an oligadenylate polymerase (TENT4B or TENT4A), and a substrate specific RNA-binding factor (ZCCHC7 or ZCCHC8). Several TRAMP-like complexes exist with specific compositions and are associated with nuclear, or nucleolar RNA exosomes.

Its subcellular location is the nucleus. It is found in the nucleolus. The chain is Zinc finger CCHC domain-containing protein 7 (ZCCHC7) from Homo sapiens (Human).